A 70-amino-acid polypeptide reads, in one-letter code: Kappa-conotoxin-like Sx11.2 (70 aa).

A signal peptide spans 1 to 26; it reads MMFRVTSVGCLLLVIVFLNLVVPTSA. 4 cysteine pairs are disulfide-bonded: cysteine 27–cysteine 41, cysteine 34–cysteine 46, cysteine 40–cysteine 50, and cysteine 45–cysteine 54. Glutamate 30, glutamate 35, and glutamate 44 each carry 4-carboxyglutamate. A 4-hydroxyproline modification is found at proline 53. Residue proline 57 is modified to Proline amide. Residues 61–70 constitute a propeptide that is removed on maturation; sequence SKLQEFFRQR.

It belongs to the conotoxin I2 superfamily. Expressed by the venom duct.

Its subcellular location is the secreted. Modulator of potassium channels, specifically up-modulates the calcium and voltage-gated BK channels, has no effect on single channel conductance, but increases the open probability of BK channels. The sequence is that of Kappa-conotoxin-like Sx11.2 from Conus striolatus (Cone snail).